The following is a 238-amino-acid chain: Small ribosomal subunit protein uS2 (238 aa).

This sequence belongs to the universal ribosomal protein uS2 family.

In Prochlorococcus marinus (strain MIT 9211), this protein is Small ribosomal subunit protein uS2.